Consider the following 303-residue polypeptide: Peroxisomal trans-2-enoyl-CoA reductase (303 aa).

23–47 is a binding site for NADP(+); it reads VTGGATGIGKAIVKELLELGSNVVI. An N6-succinyllysine modification is found at K32. Position 49 is a phosphoserine (S49). The active-site Proton acceptor is the Y179. Residue Y179 is modified to Phosphotyrosine. The short motif at 301–303 is the Microbody targeting signal element; that stretch reads AKL.

The protein belongs to the short-chain dehydrogenases/reductases (SDR) family. As to quaternary structure, interacts with PEX5, probably required to target it into peroxisomes.

It localises to the peroxisome. It catalyses the reaction a (2E)-enoyl-CoA + NADPH + H(+) = a 2,3-saturated acyl-CoA + NADP(+). The enzyme catalyses (2E)-hexenoyl-CoA + NADPH + H(+) = hexanoyl-CoA + NADP(+). The catalysed reaction is (2E)-octenoyl-CoA + NADPH + H(+) = octanoyl-CoA + NADP(+). It carries out the reaction (2E)-decenoyl-CoA + NADPH + H(+) = decanoyl-CoA + NADP(+). It catalyses the reaction (2E)-dodecenoyl-CoA + NADPH + H(+) = dodecanoyl-CoA + NADP(+). The enzyme catalyses (2E)-tetradecenoyl-CoA + NADPH + H(+) = tetradecanoyl-CoA + NADP(+). It participates in lipid metabolism; fatty acid biosynthesis. Participates in chain elongation of fatty acids. Catalyzes the reduction of trans-2-enoyl-CoAs of varying chain lengths from 6:1 to 16:1, having maximum activity with 10:1 CoA. Has no 2,4-dienoyl-CoA reductase activity. In Pongo abelii (Sumatran orangutan), this protein is Peroxisomal trans-2-enoyl-CoA reductase (PECR).